Reading from the N-terminus, the 142-residue chain is SsrA-binding protein (142 aa).

Belongs to the SmpB family.

The protein localises to the cytoplasm. Functionally, required for rescue of stalled ribosomes mediated by trans-translation. Binds to transfer-messenger RNA (tmRNA), required for stable association of tmRNA with ribosomes. tmRNA and SmpB together mimic tRNA shape, replacing the anticodon stem-loop with SmpB. tmRNA is encoded by the ssrA gene; the 2 termini fold to resemble tRNA(Ala) and it encodes a 'tag peptide', a short internal open reading frame. During trans-translation Ala-aminoacylated tmRNA acts like a tRNA, entering the A-site of stalled ribosomes, displacing the stalled mRNA. The ribosome then switches to translate the ORF on the tmRNA; the nascent peptide is terminated with the 'tag peptide' encoded by the tmRNA and targeted for degradation. The ribosome is freed to recommence translation, which seems to be the essential function of trans-translation. This chain is SsrA-binding protein, found in Mycoplasma mobile (strain ATCC 43663 / 163K / NCTC 11711) (Mesomycoplasma mobile).